We begin with the raw amino-acid sequence, 313 residues long: Ribosomal RNA small subunit methyltransferase H (313 aa).

S-adenosyl-L-methionine is bound by residues 48 to 50, Asp68, Phe102, Asp120, and Gln127; that span reads GGH. Residues 290-313 are disordered; that stretch reads TATEEEIDRNPRSRSAKLRAAARK. The segment covering 301–313 has biased composition (basic residues); it reads RSRSAKLRAAARK.

Belongs to the methyltransferase superfamily. RsmH family.

The protein localises to the cytoplasm. The catalysed reaction is cytidine(1402) in 16S rRNA + S-adenosyl-L-methionine = N(4)-methylcytidine(1402) in 16S rRNA + S-adenosyl-L-homocysteine + H(+). In terms of biological role, specifically methylates the N4 position of cytidine in position 1402 (C1402) of 16S rRNA. The polypeptide is Ribosomal RNA small subunit methyltransferase H (Koribacter versatilis (strain Ellin345)).